We begin with the raw amino-acid sequence, 957 residues long: Glycine dehydrogenase (decarboxylating) (957 aa).

Lysine 708 bears the N6-(pyridoxal phosphate)lysine mark.

The protein belongs to the GcvP family. As to quaternary structure, the glycine cleavage system is composed of four proteins: P, T, L and H. Pyridoxal 5'-phosphate serves as cofactor.

The enzyme catalyses N(6)-[(R)-lipoyl]-L-lysyl-[glycine-cleavage complex H protein] + glycine + H(+) = N(6)-[(R)-S(8)-aminomethyldihydrolipoyl]-L-lysyl-[glycine-cleavage complex H protein] + CO2. Functionally, the glycine cleavage system catalyzes the degradation of glycine. The P protein binds the alpha-amino group of glycine through its pyridoxal phosphate cofactor; CO(2) is released and the remaining methylamine moiety is then transferred to the lipoamide cofactor of the H protein. This chain is Glycine dehydrogenase (decarboxylating), found in Shigella boydii serotype 4 (strain Sb227).